Here is a 203-residue protein sequence, read N- to C-terminus: Ribosomal RNA large subunit methyltransferase E (203 aa).

G59, W61, D79, D97, and D119 together coordinate S-adenosyl-L-methionine. K159 serves as the catalytic Proton acceptor.

It belongs to the class I-like SAM-binding methyltransferase superfamily. RNA methyltransferase RlmE family.

It is found in the cytoplasm. The enzyme catalyses uridine(2552) in 23S rRNA + S-adenosyl-L-methionine = 2'-O-methyluridine(2552) in 23S rRNA + S-adenosyl-L-homocysteine + H(+). In terms of biological role, specifically methylates the uridine in position 2552 of 23S rRNA at the 2'-O position of the ribose in the fully assembled 50S ribosomal subunit. The polypeptide is Ribosomal RNA large subunit methyltransferase E (Desulforapulum autotrophicum (strain ATCC 43914 / DSM 3382 / VKM B-1955 / HRM2) (Desulfobacterium autotrophicum)).